A 343-amino-acid polypeptide reads, in one-letter code: Methionine import ATP-binding protein MetN (343 aa).

The 240-residue stretch at 2–241 (ITLSHITKQF…PKTPLAQAFI (240 aa)) folds into the ABC transporter domain. Residue 38 to 45 (GASGAGKS) participates in ATP binding.

The protein belongs to the ABC transporter superfamily. Methionine importer (TC 3.A.1.24) family. The complex is composed of two ATP-binding proteins (MetN), two transmembrane proteins (MetI) and a solute-binding protein (MetQ).

It localises to the cell inner membrane. It carries out the reaction L-methionine(out) + ATP + H2O = L-methionine(in) + ADP + phosphate + H(+). The catalysed reaction is D-methionine(out) + ATP + H2O = D-methionine(in) + ADP + phosphate + H(+). Part of the ABC transporter complex MetNIQ involved in methionine import. Responsible for energy coupling to the transport system. The polypeptide is Methionine import ATP-binding protein MetN (Sodalis glossinidius (strain morsitans)).